A 502-amino-acid polypeptide reads, in one-letter code: MRINLNPANAGLDLDVSIGENKNLGRIAQIIGPVLDVAFPPGKMPNIYNALVVKGRDTLGQEINVTCEVQQLLGNNRVRAVAMSATEGLKRGMDVVDMGNPLSVPVGGATLGRIFNVLGEPVDNLGPVDNRTKAPIHKSAPAFIQLDTKLSIFETGIKVVDLLAPYRRGGKIGLFGGAGVGKTVLIMELINNIAKAHGGVSVFGGVGERTREGNDLYMEMKESGVINEQNLAESKVALVYGQMNEPPGARMRVGLTALTMAEYFRDVNEQDVLLFIDNIFRFVQAGSEVSALLGRMPSAVGYQPTLSTEMGTLQERITSTKKGSITSIQAVYVPADDLTDPAPATTFAHLDATTVLSRGLAAKGIYPAVDPLDSTSTMLQPRIVGEEHYETAQQVKQTLQRYKELQDIIAILGLDELSEEDRLTVARARKIERFLSQPFFVAEVFTGSPGKYVGLAETIRGFKLILSGEFDSLPEQAFYLVGNIDEATAKATNLEMESKLKK.

A Phosphoserine modification is found at serine 17. 176-183 serves as a coordination point for ATP; that stretch reads GGAGVGKT.

The protein belongs to the ATPase alpha/beta chains family. As to quaternary structure, F-type ATPases have 2 components, CF(1) - the catalytic core - and CF(0) - the membrane proton channel. CF(1) has five subunits: alpha(3), beta(3), gamma(1), delta(1), epsilon(1). CF(0) has four main subunits: a(1), b(1), b'(1) and c(9-12).

Its subcellular location is the plastid. The protein resides in the chloroplast thylakoid membrane. The catalysed reaction is ATP + H2O + 4 H(+)(in) = ADP + phosphate + 5 H(+)(out). Functionally, produces ATP from ADP in the presence of a proton gradient across the membrane. The catalytic sites are hosted primarily by the beta subunits. The protein is ATP synthase subunit beta, chloroplastic of Lepidium virginicum (Virginia pepperweed).